A 383-amino-acid chain; its full sequence is 2-methylcitrate synthase 2 (383 aa).

Residues R73 and H195 each coordinate substrate. The active site involves H230. CoA is bound at residue 263–267 (VVMGF). The active site involves H269. Residue R278 coordinates substrate. Residue D320 is part of the active site. Substrate is bound by residues R345 and R364.

This sequence belongs to the citrate synthase family. Homodimer.

It catalyses the reaction propanoyl-CoA + oxaloacetate + H2O = (2S,3S)-2-methylcitrate + CoA + H(+). The enzyme catalyses oxaloacetate + acetyl-CoA + H2O = citrate + CoA + H(+). Its pathway is organic acid metabolism; propanoate degradation. It functions in the pathway carbohydrate metabolism; tricarboxylic acid cycle; isocitrate from oxaloacetate: step 1/2. In terms of biological role, involved in the catabolism of short chain fatty acids (SCFA) via the tricarboxylic acid (TCA)(acetyl degradation route) and via the 2-methylcitrate cycle I (propionate degradation route). Catalyzes the Claisen condensation of propionyl-CoA and oxaloacetate (OAA) to yield 2-methylcitrate (2-MC) and CoA. Also catalyzes the condensation of oxaloacetate with acetyl-CoA but with a lower specificity. In Corynebacterium glutamicum (strain ATCC 13032 / DSM 20300 / JCM 1318 / BCRC 11384 / CCUG 27702 / LMG 3730 / NBRC 12168 / NCIMB 10025 / NRRL B-2784 / 534), this protein is 2-methylcitrate synthase 2 (prpC2).